The following is a 41-amino-acid chain: Large ribosomal subunit protein bL36 (41 aa).

It belongs to the bacterial ribosomal protein bL36 family.

This chain is Large ribosomal subunit protein bL36, found in Xylella fastidiosa (strain 9a5c).